The primary structure comprises 535 residues: Cytochrome P450 monooxygenase claP (535 aa).

2 helical membrane passes run 7–27 and 225–245; these read IGTL…KLVG and YFSM…KLPT. Cysteine 472 contributes to the heme binding site.

Belongs to the cytochrome P450 family. Heme serves as cofactor.

The protein resides in the membrane. The protein operates within secondary metabolite biosynthesis; terpenoid biosynthesis. Functionally, cytochrome P450 monooxygenase; part of the gene cluster that mediates the biosynthesis of clavilactone A, a meroterpenoid that features a unique benzo-fused ten-membered carbocyclic ring unit with an alpha,beta-epoxy-gamma-lactone moiety, forming an intriguing 10/5/3 tricyclic nested skeleton. Cytochrome P450 monooxygenases claO, claP, claQ, claU, and claW are close orthologs, suggesting that a redundant function or pseudogenes are present in the cla cluster. These monoxygenases are not involved in clavilactone A biosynthesis nor its modification. ClaR, ClaS and ClaT are sufficient to produce clavilactone A. The biosynthesis begins with the prenyltransferase claS that transfers geranyl pyrophosphate (GPP) to hydroquinone to produces geranylhydroquinone. The cytochrome P450 monooxygenase claR then catalyzes the diradical coupling reaction between the intramolecular hydroquinone and allyl moieties to form the benzo-fused ten-membered carbocyclic ring unit of wigantol. Finally the cytochrome P450 monooxygenase claT exquisitely and stereoselectively assembles the alpha,beta-epoxy-gamma-lactone moiety, producing clavilactone A via arnebinol A. The sequence is that of Cytochrome P450 monooxygenase claP from Ampulloclitocybe clavipes (Club foot).